Reading from the N-terminus, the 238-residue chain is Enolase-phosphatase E1 (238 aa).

The protein belongs to the HAD-like hydrolase superfamily. MasA/MtnC family. In terms of assembly, monomer. The cofactor is Mg(2+).

It catalyses the reaction 5-methylsulfanyl-2,3-dioxopentyl phosphate + H2O = 1,2-dihydroxy-5-(methylsulfanyl)pent-1-en-3-one + phosphate. The protein operates within amino-acid biosynthesis; L-methionine biosynthesis via salvage pathway; L-methionine from S-methyl-5-thio-alpha-D-ribose 1-phosphate: step 3/6. It participates in amino-acid biosynthesis; L-methionine biosynthesis via salvage pathway; L-methionine from S-methyl-5-thio-alpha-D-ribose 1-phosphate: step 4/6. Its function is as follows. Bifunctional enzyme that catalyzes the enolization of 2,3-diketo-5-methylthiopentyl-1-phosphate (DK-MTP-1-P) into the intermediate 2-hydroxy-3-keto-5-methylthiopentenyl-1-phosphate (HK-MTPenyl-1-P), which is then dephosphorylated to form the acireductone 1,2-dihydroxy-3-keto-5-methylthiopentene (DHK-MTPene). The chain is Enolase-phosphatase E1 from Synechococcus elongatus (strain ATCC 33912 / PCC 7942 / FACHB-805) (Anacystis nidulans R2).